We begin with the raw amino-acid sequence, 385 residues long: UPF0284 protein P9215_05181 (385 aa).

It belongs to the UPF0284 family.

This is UPF0284 protein P9215_05181 from Prochlorococcus marinus (strain MIT 9215).